The following is a 585-amino-acid chain: Proline--tRNA ligase (585 aa).

The protein belongs to the class-II aminoacyl-tRNA synthetase family. ProS type 1 subfamily. Homodimer.

The protein localises to the cytoplasm. The catalysed reaction is tRNA(Pro) + L-proline + ATP = L-prolyl-tRNA(Pro) + AMP + diphosphate. In terms of biological role, catalyzes the attachment of proline to tRNA(Pro) in a two-step reaction: proline is first activated by ATP to form Pro-AMP and then transferred to the acceptor end of tRNA(Pro). As ProRS can inadvertently accommodate and process non-cognate amino acids such as alanine and cysteine, to avoid such errors it has two additional distinct editing activities against alanine. One activity is designated as 'pretransfer' editing and involves the tRNA(Pro)-independent hydrolysis of activated Ala-AMP. The other activity is designated 'posttransfer' editing and involves deacylation of mischarged Ala-tRNA(Pro). The misacylated Cys-tRNA(Pro) is not edited by ProRS. The protein is Proline--tRNA ligase of Nocardia farcinica (strain IFM 10152).